We begin with the raw amino-acid sequence, 126 residues long: Interleukin-18-binding protein (126 aa).

The N-terminal stretch at 1-16 (MRILFLIAFMYGCVHS) is a signal peptide.

It belongs to the orthopoxvirus OPG022 family.

It is found in the secreted. Its function is as follows. Soluble IL18-binding protein that may modulate the host antiviral response. In Cynomys gunnisoni (Gunnison's prairie dog), this protein is Interleukin-18-binding protein (OPG022).